The primary structure comprises 503 residues: AMP phosphorylase (503 aa).

AMP-binding positions include G168, 194–199 (SRAITG), and S203. The Proton donor role is filled by D256. Positions 264 and 288 each coordinate AMP.

This sequence belongs to the thymidine/pyrimidine-nucleoside phosphorylase family. Type 2 subfamily.

The enzyme catalyses AMP + phosphate = alpha-D-ribose 1,5-bisphosphate + adenine. It carries out the reaction CMP + phosphate = cytosine + alpha-D-ribose 1,5-bisphosphate. It catalyses the reaction UMP + phosphate = alpha-D-ribose 1,5-bisphosphate + uracil. Its function is as follows. Catalyzes the conversion of AMP and phosphate to adenine and ribose 1,5-bisphosphate (R15P). Exhibits phosphorylase activity toward CMP and UMP in addition to AMP. Functions in an archaeal AMP degradation pathway, together with R15P isomerase and RubisCO. The sequence is that of AMP phosphorylase from Methanocella arvoryzae (strain DSM 22066 / NBRC 105507 / MRE50).